A 556-amino-acid polypeptide reads, in one-letter code: Urocanate hydratase (556 aa).

NAD(+)-binding positions include 52–53 (GG), Gln-130, 176–178 (GMG), Glu-196, Arg-201, 242–243 (NA), 263–267 (QTSAH), 273–274 (YL), and Tyr-322. Cys-410 is an active-site residue. An NAD(+)-binding site is contributed by Gly-492.

This sequence belongs to the urocanase family. NAD(+) serves as cofactor.

It localises to the cytoplasm. It carries out the reaction 4-imidazolone-5-propanoate = trans-urocanate + H2O. Its pathway is amino-acid degradation; L-histidine degradation into L-glutamate; N-formimidoyl-L-glutamate from L-histidine: step 2/3. Functionally, catalyzes the conversion of urocanate to 4-imidazolone-5-propionate. The chain is Urocanate hydratase from Acidiphilium cryptum (strain JF-5).